A 118-amino-acid polypeptide reads, in one-letter code: Large ribosomal subunit protein uL18 (118 aa).

The span at 1–10 (MKTTRRDATR) shows a compositional bias: basic and acidic residues. The disordered stretch occupies residues 1–20 (MKTTRRDATRSRHQRVRRKV). Over residues 11 to 20 (SRHQRVRRKV) the composition is skewed to basic residues.

It belongs to the universal ribosomal protein uL18 family. In terms of assembly, part of the 50S ribosomal subunit; part of the 5S rRNA/L5/L18/L25 subcomplex. Contacts the 5S and 23S rRNAs.

In terms of biological role, this is one of the proteins that bind and probably mediate the attachment of the 5S RNA into the large ribosomal subunit, where it forms part of the central protuberance. The sequence is that of Large ribosomal subunit protein uL18 from Acaryochloris marina (strain MBIC 11017).